The sequence spans 455 residues: Gamma-aminobutyric acid receptor subunit alpha-1 (455 aa).

The signal sequence occupies residues Met-1–Gly-27. Residues Gln-28 to Phe-253 lie on the Extracellular side of the membrane. N-linked (GlcNAc...) asparagine glycosylation is present at Asn-38. Arg-94 contacts 4-aminobutanoate. Asn-138 carries N-linked (GlcNAc...) asparagine glycosylation. Thr-157 provides a ligand contact to 4-aminobutanoate. A disulfide bond links Cys-166 and Cys-180. A helical transmembrane segment spans residues Val-254–Leu-274. Over Asn-275–Val-279 the chain is Cytoplasmic. The chain crosses the membrane as a helical span at residues Pro-280 to Arg-301. Topologically, residues Asn-302–Thr-311 are extracellular. Residues Ala-312–Thr-333 traverse the membrane as a helical segment. The Cytoplasmic portion of the chain corresponds to Val-334 to Arg-420. Residues Leu-421–Thr-440 form a helical membrane-spanning segment. Over Tyr-441–Gln-455 the chain is Extracellular.

The protein belongs to the ligand-gated ion channel (TC 1.A.9) family. Gamma-aminobutyric acid receptor (TC 1.A.9.5) subfamily. GABRA1 sub-subfamily. As to quaternary structure, heteropentamer, formed by a combination of alpha (GABRA1-6), beta (GABRB1-3), gamma (GABRG1-3), delta (GABRD), epsilon (GABRE), rho (GABRR1-3), pi (GABRP) and theta (GABRQ) subunits, each subunit exhibiting distinct physiological and pharmacological properties. As to expression, brain.

It is found in the postsynaptic cell membrane. Its subcellular location is the cell membrane. It catalyses the reaction chloride(in) = chloride(out). Allosterically activated by benzodiazepines, the neuroanesthetic alphaxalone and pentobarbital. Inhibited by the antagonist bicuculline. Potentiated by histamine. Alpha subunit of the heteropentameric ligand-gated chloride channel gated by gamma-aminobutyric acid (GABA), a major inhibitory neurotransmitter in the brain. GABA-gated chloride channels, also named GABA(A) receptors (GABAAR), consist of five subunits arranged around a central pore and contain GABA active binding site(s) located at the alpha and beta subunit interface(s). When activated by GABA, GABAARs selectively allow the flow of chloride anions across the cell membrane down their electrochemical gradient. Chloride influx into the postsynaptic neuron following GABAAR opening decreases the neuron ability to generate a new action potential, thereby reducing nerve transmission. The GABAARs can also initiate the formation of functional inhibitory GABAergic synapses. GABAARs function also as histamine receptor where histamine binds at the interface of two neighboring beta subunits and potentiates GABA response. The chain is Gamma-aminobutyric acid receptor subunit alpha-1 (GABRA1) from Gallus gallus (Chicken).